Here is a 93-residue protein sequence, read N- to C-terminus: Bublin coiled-coil protein (93 aa).

2 disordered regions span residues 1–26 (MAGPNGDPHVLGGGTGDEGDEGGDTF) and 74–93 (QQQSKQLNTGADVQGSQPPA). Positions 17-26 (DEGDEGGDTF) are enriched in acidic residues. Positions 59–80 (LKELLESNRQTRLEFQQQSKQL) form a coiled coil.

It belongs to the UPF0184 (EST00098) family.

The protein resides in the cell junction. It localises to the cytoplasm. Its subcellular location is the cytoskeleton. Functionally, essential for intermediate filament organization in intestinal cells, interacts with intermediate filament and regulates intestinal lumen morphology. This chain is Bublin coiled-coil protein (BBLN), found in Taeniopygia guttata (Zebra finch).